We begin with the raw amino-acid sequence, 361 residues long: Peptide chain release factor 1 (361 aa).

N5-methylglutamine is present on Q237. Residues 283–296 (VEDEKRRSEEESTR) show a composition bias toward basic and acidic residues. The tract at residues 283–305 (VEDEKRRSEEESTRRNLVSSGDR) is disordered.

Belongs to the prokaryotic/mitochondrial release factor family. Post-translationally, methylated by PrmC. Methylation increases the termination efficiency of RF1.

It localises to the cytoplasm. Its function is as follows. Peptide chain release factor 1 directs the termination of translation in response to the peptide chain termination codons UAG and UAA. This Shewanella woodyi (strain ATCC 51908 / MS32) protein is Peptide chain release factor 1.